A 90-amino-acid polypeptide reads, in one-letter code: MSITSEKKKSLMNIYAIKEDDTGSSFVQCAILTERISNLTEHFKVHKHDHHSKRGLLILIGRRRKHLNYIKRKFGNEAYQELIEKLGIRK.

Belongs to the universal ribosomal protein uS15 family. Part of the 30S ribosomal subunit. Forms a bridge to the 50S subunit in the 70S ribosome, contacting the 23S rRNA.

In terms of biological role, one of the primary rRNA binding proteins, it binds directly to 16S rRNA where it helps nucleate assembly of the platform of the 30S subunit by binding and bridging several RNA helices of the 16S rRNA. Its function is as follows. Forms an intersubunit bridge (bridge B4) with the 23S rRNA of the 50S subunit in the ribosome. The chain is Small ribosomal subunit protein uS15 from Wolbachia pipientis wMel.